Reading from the N-terminus, the 243-residue chain is UMP-CMP kinase 1 (243 aa).

29-34 contacts ATP; sequence GSGKGT. Residues 49–78 form an NMP region; it reads SAGDLLREEAKYDTEQGTMIKNLMNEGKLV. Residues Arg55, 76 to 78, and 103 to 106 each bind a ribonucleoside 5'-phosphate; these read KLV and GFPR. Asn110 contributes to the CMP binding site. An LID region spans residues 141–149; that stretch reads NRNQGRDDD. Arg142 is an ATP binding site. A ribonucleoside 5'-phosphate-binding residues include Arg146 and Arg157. Residue Arg185 participates in ATP binding.

This sequence belongs to the adenylate kinase family. UMP-CMP kinase subfamily. As to quaternary structure, monomer. Mg(2+) is required as a cofactor.

The protein localises to the cytoplasm. The protein resides in the nucleus. It catalyses the reaction UMP + ATP = UDP + ADP. It carries out the reaction CMP + ATP = CDP + ADP. The catalysed reaction is dCMP + ATP = dCDP + ADP. In terms of biological role, catalyzes the phosphorylation of pyrimidine nucleoside monophosphates at the expense of ATP. Plays an important role in de novo pyrimidine nucleotide biosynthesis. Has preference for UMP and CMP as phosphate acceptors. In Oryza sativa subsp. japonica (Rice), this protein is UMP-CMP kinase 1.